The chain runs to 357 residues: Outer membrane porin protein OmpD (357 aa).

The signal sequence occupies residues 1 to 21 (MKLKLVAVAVTTLLAAGAVNA).

This sequence belongs to the Gram-negative porin family. As to quaternary structure, homotrimer.

It is found in the cell outer membrane. In terms of biological role, forms pores that allow passive diffusion of small molecules across the outer membrane. The sequence is that of Outer membrane porin protein OmpD (ompD) from Citrobacter koseri (strain ATCC BAA-895 / CDC 4225-83 / SGSC4696).